We begin with the raw amino-acid sequence, 128 residues long: MARVKRGVTARARHKKVVALAKGYRGRSKNCYRAALQRLEKALVYAYRDRRNRKRDFRRLWIVRINAAARQWGIKYSQLMKGMALCGIELNRKMLAEMAVNDKAAFEKVVSAVAGTCGYACAVNQQDK.

It belongs to the bacterial ribosomal protein bL20 family.

Its function is as follows. Binds directly to 23S ribosomal RNA and is necessary for the in vitro assembly process of the 50S ribosomal subunit. It is not involved in the protein synthesizing functions of that subunit. The polypeptide is Large ribosomal subunit protein bL20 (Anaplasma marginale (strain Florida)).